The following is a 22-amino-acid chain: Unknown protein from spot 168 of 2D-PAGE of etiolated coleoptile (22 aa).

This is Unknown protein from spot 168 of 2D-PAGE of etiolated coleoptile from Zea mays (Maize).